The sequence spans 375 residues: DNA replication and repair protein RecF (375 aa).

Position 30-37 (Gly-30–Thr-37) interacts with ATP.

It belongs to the RecF family.

The protein resides in the cytoplasm. Functionally, the RecF protein is involved in DNA metabolism; it is required for DNA replication and normal SOS inducibility. RecF binds preferentially to single-stranded, linear DNA. It also seems to bind ATP. This Bacillus anthracis (strain A0248) protein is DNA replication and repair protein RecF.